A 195-amino-acid polypeptide reads, in one-letter code: Glycerol-3-phosphate acyltransferase (195 aa).

5 helical membrane passes run 3-23 (FQVV…GFIL), 52-72 (LALL…AIAQ), 80-100 (ILFL…YLFF), 113-133 (LIFI…ICFL), and 147-167 (LIAL…IFAI).

The protein belongs to the PlsY family. In terms of assembly, probably interacts with PlsX.

It localises to the cell inner membrane. The enzyme catalyses an acyl phosphate + sn-glycerol 3-phosphate = a 1-acyl-sn-glycero-3-phosphate + phosphate. Its pathway is lipid metabolism; phospholipid metabolism. Its function is as follows. Catalyzes the transfer of an acyl group from acyl-phosphate (acyl-PO(4)) to glycerol-3-phosphate (G3P) to form lysophosphatidic acid (LPA). This enzyme utilizes acyl-phosphate as fatty acyl donor, but not acyl-CoA or acyl-ACP. This Ehrlichia ruminantium (strain Gardel) protein is Glycerol-3-phosphate acyltransferase.